The following is a 540-amino-acid chain: Chaperonin GroEL 3 (540 aa).

ATP is bound by residues 30 to 33 (TLGP), Lys-51, 87 to 91 (DGTTT), Gly-415, 480 to 482 (NAA), and Asp-496.

It belongs to the chaperonin (HSP60) family. In terms of assembly, forms a cylinder of 14 subunits composed of two heptameric rings stacked back-to-back. Interacts with the co-chaperonin GroES.

The protein resides in the cytoplasm. The catalysed reaction is ATP + H2O + a folded polypeptide = ADP + phosphate + an unfolded polypeptide.. Functionally, together with its co-chaperonin GroES, plays an essential role in assisting protein folding. The GroEL-GroES system forms a nano-cage that allows encapsulation of the non-native substrate proteins and provides a physical environment optimized to promote and accelerate protein folding. The chain is Chaperonin GroEL 3 from Bradyrhizobium sp. (strain BTAi1 / ATCC BAA-1182).